A 139-amino-acid chain; its full sequence is Thioredoxin 2 (139 aa).

Residues 5-18 (CTHCQAINRIPDDR) fold into a zinc finger. The region spanning 26–139 (GRCGHDLFDG…PFDSWLNESL (114 aa)) is the Thioredoxin domain. A disulfide bridge connects residues cysteine 64 and cysteine 67.

This sequence belongs to the thioredoxin family.

The protein resides in the cytoplasm. It catalyses the reaction [protein]-dithiol + NAD(+) = [protein]-disulfide + NADH + H(+). The enzyme catalyses [protein]-dithiol + NADP(+) = [protein]-disulfide + NADPH + H(+). Its function is as follows. Efficient electron donor for the essential enzyme ribonucleotide reductase. Is also able to reduce the interchain disulfide bridges of insulin. This Escherichia coli O6:H1 (strain CFT073 / ATCC 700928 / UPEC) protein is Thioredoxin 2 (trxC).